Consider the following 464-residue polypeptide: Soluble pyridine nucleotide transhydrogenase (464 aa).

FAD is bound at residue 35–44; it reads DSRRQVGGNC.

Belongs to the class-I pyridine nucleotide-disulfide oxidoreductase family. It depends on FAD as a cofactor.

It is found in the cytoplasm. It carries out the reaction NAD(+) + NADPH = NADH + NADP(+). Functionally, conversion of NADPH, generated by peripheral catabolic pathways, to NADH, which can enter the respiratory chain for energy generation. The polypeptide is Soluble pyridine nucleotide transhydrogenase (Pseudomonas syringae pv. syringae (strain B728a)).